The following is a 448-amino-acid chain: Death-associated protein kinase 3 (448 aa).

The 263-residue stretch at 13–275 (YEMGEELGSG…IAQSLEHSWI (263 aa)) folds into the Protein kinase domain. ATP-binding positions include 19–27 (LGSGQFAIV) and Lys42. Asp139 functions as the Proton acceptor in the catalytic mechanism. The interval 161–204 (DFGIAHRIEAGSEFKNIFGTPEFVAPEIVNYEPLGLEADMWSIG) is activation segment. Thr180 and Thr225 each carry phosphothreonine. Thr265 bears the Phosphothreonine; by autocatalysis mark. The residue at position 265 (Thr265) is a Phosphothreonine; by ROCK1. Ser304 bears the Phosphoserine; by DAPK1 mark. Residue Ser306 is modified to Phosphoserine; by autocatalysis and DAPK1. Ser307, Ser313, and Ser321 each carry phosphoserine; by DAPK1. Positions 390–448 (AQEEARAALLGAGGLKRRLCRLENRYDALAAQVAAEVQFVRDLVRALEQERLQAECGVR) are interaction with CDC5L. Positions 418–448 (LAAQVAAEVQFVRDLVRALEQERLQAECGVR) are required for interaction with ATF4 but not with PAWR. A leucine-zipper region spans residues 422–436 (VAAEVQFVRDLVRAL).

The protein belongs to the protein kinase superfamily. CAMK Ser/Thr protein kinase family. DAP kinase subfamily. In terms of assembly, homooligomer in its kinase-active form (homotrimers and homodimers are reported); monomeric in its kinase-inactive form. Homodimerization is required for activation segment autophosphorylation. Interacts with DAXX, ATF4, NLK, TCF7L2, UBE2D1, UBE2D2, UBE2D3 and CDC5L. Interacts with PAWR; also demonstrated in aorta smooth muscle cells indicative for the cytoskeletal targeting function of PAWR. Interacts with AR; enhanced by AATF. Interacts with LUZP1; the interaction is likely to occur throughout the cell cycle and reduces the LUZP1-mediated suppression of MYL9 phosphorylation. Requires Mg(2+) as cofactor. Post-translationally, ubiquitinated. Ubiquitination mediated by the UBE2D3 E3 ligase does not lead to proteasomal degradation, but influences promyelocytic leukemia protein nuclear bodies (PML-NBs) formation in the nucleus. In terms of processing, the phosphorylation status is critical for kinase activity, oligomerization and intracellular localization. Phosphorylation at Thr-180, Thr-225 and Thr-265 is essential for activity. The phosphorylated form is localized in the cytoplasm and nuclear translocation or retention is maximal when it is not phosphorylated. Phosphorylation increases the trimeric form, and its dephosphorylation favors a kinase-inactive monomeric form. As to expression, ubiquitously expressed in all tissue types examined. High levels in brain, heart, lung and spleen, lower expression in kidney, liver, skeletal muscle and testis. Isoform 2 is expressed in the smooth muscle.

It localises to the nucleus. It is found in the PML body. The protein localises to the cytoplasm. Its subcellular location is the cytoskeleton. The protein resides in the microtubule organizing center. It localises to the chromosome. It is found in the centromere. The protein localises to the spindle. Its subcellular location is the midbody. The enzyme catalyses L-seryl-[protein] + ATP = O-phospho-L-seryl-[protein] + ADP + H(+). The catalysed reaction is L-threonyl-[protein] + ATP = O-phospho-L-threonyl-[protein] + ADP + H(+). Its activity is regulated as follows. A sequential activation is proposed: autophosphorylation at consensus sites is leading to dimerization of the catalytic domain and activation segment exchange (producing an active confirmation of both kinase modules in trans) followed by phosphorylation at Thr-180 in the activation segment and at other regulatory sites. Phosphorylation at Thr-180, Thr-225 and Thr-265 is essential for activity. Inhibited by pyridone 6 (K00225), a potent, ATP-competitive inhibitor. Phosphorylation at Thr-180, Thr-225 and Thr-265 is essential for activity. Its function is as follows. Serine/threonine kinase which is involved in the regulation of apoptosis, autophagy, transcription, translation and actin cytoskeleton reorganization. Regulates both type I (caspase-dependent) apoptotic and type II (caspase-independent) autophagic cell deaths signal, depending on the cellular setting. Involved in formation of promyelocytic leukemia protein nuclear body (PML-NB). Involved in apoptosis involving PAWR which mediates cytoplasmic relocation; in vitro phosphorylates PAWR. Regulates myosin phosphorylation in both smooth muscle and non-muscle cells. In smooth muscle, regulates myosin either directly by phosphorylating MYL12B and MYL9 or through inhibition of smooth muscle myosin phosphatase (SMPP1M) via phosphorylation of PPP1R12A; the inhibition of SMPP1M functions to enhance muscle responsiveness to Ca(2+) and promote a contractile state. Phosphorylates MYL12B in non-muscle cells leading to reorganization of actin cytoskeleton such as in regulation of cell polarity and cell migration. Positively regulates canonical Wnt/beta-catenin signaling through interaction with NLK and TCF7L2; disrupts the NLK-TCF7L2 complex thereby influencing the phosphorylation of TCF7L2 by NLK. Phosphorylates RPL13A on 'Ser-77' upon interferon-gamma activation which is causing RPL13A release from the ribosome, RPL13A association with the GAIT complex and its subsequent involvement in transcript-selective translation inhibition. Phosphorylates STAT3 and enhances its transcriptional activity. Enhances transcription from AR-responsive promoters in a hormone- and kinase-dependent manner. Phosphorylates histone H3 on 'Thr-11' at centromeres during mitosis. The protein is Death-associated protein kinase 3 (Dapk3) of Rattus norvegicus (Rat).